We begin with the raw amino-acid sequence, 98 residues long: Integration host factor subunit alpha (98 aa).

The protein belongs to the bacterial histone-like protein family. As to quaternary structure, heterodimer of an alpha and a beta chain.

Functionally, this protein is one of the two subunits of integration host factor, a specific DNA-binding protein that functions in genetic recombination as well as in transcriptional and translational control. The polypeptide is Integration host factor subunit alpha (Idiomarina loihiensis (strain ATCC BAA-735 / DSM 15497 / L2-TR)).